The chain runs to 321 residues: Glucokinase (321 aa).

Ala8 to Thr13 provides a ligand contact to ATP.

Belongs to the bacterial glucokinase family.

The protein resides in the cytoplasm. The catalysed reaction is D-glucose + ATP = D-glucose 6-phosphate + ADP + H(+). In Paramagnetospirillum magneticum (strain ATCC 700264 / AMB-1) (Magnetospirillum magneticum), this protein is Glucokinase.